Here is a 177-residue protein sequence, read N- to C-terminus: Cytochrome c oxidase assembly protein CtaG (177 aa).

The Cytoplasmic segment spans residues 1–8 (MTQKAKNT). Residues 9–29 (IYLLILIILSMLCLVYASVPL) form a helical; Signal-anchor for type II membrane protein membrane-spanning segment. The Periplasmic portion of the chain corresponds to 30–177 (YSIFCKVTGY…TFFKYKETTK (148 aa)).

This sequence belongs to the COX11/CtaG family.

The protein localises to the cell inner membrane. Functionally, exerts its effect at some terminal stage of cytochrome c oxidase synthesis, probably by being involved in the insertion of the copper B into subunit I. This is Cytochrome c oxidase assembly protein CtaG from Ehrlichia ruminantium (strain Gardel).